A 272-amino-acid chain; its full sequence is D-aminoacyl-tRNA deacylase (272 aa).

This sequence belongs to the DtdA deacylase family. Monomer. Zn(2+) is required as a cofactor.

It carries out the reaction a D-aminoacyl-tRNA + H2O = a tRNA + a D-alpha-amino acid + H(+). The enzyme catalyses glycyl-tRNA(Ala) + H2O = tRNA(Ala) + glycine + H(+). Its function is as follows. D-aminoacyl-tRNA deacylase with broad substrate specificity. By recycling D-aminoacyl-tRNA to D-amino acids and free tRNA molecules, this enzyme counteracts the toxicity associated with the formation of D-aminoacyl-tRNA entities in vivo. In Thermococcus kodakarensis (strain ATCC BAA-918 / JCM 12380 / KOD1) (Pyrococcus kodakaraensis (strain KOD1)), this protein is D-aminoacyl-tRNA deacylase.